A 110-amino-acid polypeptide reads, in one-letter code: Keratin-associated protein 6-3 (110 aa).

Belongs to the KRTAP type 6 family. Interacts with hair keratins.

In the hair cortex, hair keratin intermediate filaments are embedded in an interfilamentous matrix, consisting of hair keratin-associated proteins (KRTAP), which are essential for the formation of a rigid and resistant hair shaft through their extensive disulfide bond cross-linking with abundant cysteine residues of hair keratins. The matrix proteins include the high-sulfur and high-glycine-tyrosine keratins. This chain is Keratin-associated protein 6-3, found in Homo sapiens (Human).